Reading from the N-terminus, the 729-residue chain is Fatty acid oxidation complex subunit alpha (729 aa).

Residues 1 to 189 (MLYKGDTLYL…KIGLVDGVVK (189 aa)) form an enoyl-CoA hydratase/isomerase region. Aspartate 296 provides a ligand contact to substrate. The interval 311-729 (ETPKHAAVLG…ARPVGELKTA (419 aa)) is 3-hydroxyacyl-CoA dehydrogenase. NAD(+) is bound by residues methionine 324, aspartate 343, 400-402 (VVE), lysine 407, and serine 429. Histidine 450 (for 3-hydroxyacyl-CoA dehydrogenase activity) is an active-site residue. NAD(+) is bound at residue asparagine 453. Substrate-binding residues include asparagine 500 and tyrosine 660.

This sequence in the N-terminal section; belongs to the enoyl-CoA hydratase/isomerase family. It in the C-terminal section; belongs to the 3-hydroxyacyl-CoA dehydrogenase family. As to quaternary structure, heterotetramer of two alpha chains (FadB) and two beta chains (FadA).

The catalysed reaction is a (3S)-3-hydroxyacyl-CoA + NAD(+) = a 3-oxoacyl-CoA + NADH + H(+). The enzyme catalyses a (3S)-3-hydroxyacyl-CoA = a (2E)-enoyl-CoA + H2O. It catalyses the reaction a 4-saturated-(3S)-3-hydroxyacyl-CoA = a (3E)-enoyl-CoA + H2O. It carries out the reaction (3S)-3-hydroxybutanoyl-CoA = (3R)-3-hydroxybutanoyl-CoA. The catalysed reaction is a (3Z)-enoyl-CoA = a 4-saturated (2E)-enoyl-CoA. The enzyme catalyses a (3E)-enoyl-CoA = a 4-saturated (2E)-enoyl-CoA. It participates in lipid metabolism; fatty acid beta-oxidation. In terms of biological role, involved in the aerobic and anaerobic degradation of long-chain fatty acids via beta-oxidation cycle. Catalyzes the formation of 3-oxoacyl-CoA from enoyl-CoA via L-3-hydroxyacyl-CoA. It can also use D-3-hydroxyacyl-CoA and cis-3-enoyl-CoA as substrate. In Enterobacter cloacae, this protein is Fatty acid oxidation complex subunit alpha.